Consider the following 307-residue polypeptide: Probable GTP 3',8-cyclase (307 aa).

One can recognise a Radical SAM core domain in the interval 5-231 (RFGRPVTNLR…MHRRKKYFIP (227 aa)). Arginine 14 lines the GTP pocket. Positions 21, 25, and 28 each coordinate [4Fe-4S] cluster. Lysine 62 serves as a coordination point for GTP. An S-adenosyl-L-methionine-binding site is contributed by glycine 66. Threonine 91 is a binding site for GTP. Serine 115 provides a ligand contact to S-adenosyl-L-methionine. Position 151 (lysine 151) interacts with GTP. Methionine 190 lines the S-adenosyl-L-methionine pocket. Positions 251 and 254 each coordinate [4Fe-4S] cluster. A GTP-binding site is contributed by 256–258 (RLR). [4Fe-4S] cluster is bound at residue cysteine 268.

Belongs to the radical SAM superfamily. MoaA family. [4Fe-4S] cluster is required as a cofactor.

It catalyses the reaction GTP + AH2 + S-adenosyl-L-methionine = (8S)-3',8-cyclo-7,8-dihydroguanosine 5'-triphosphate + 5'-deoxyadenosine + L-methionine + A + H(+). It participates in cofactor biosynthesis; molybdopterin biosynthesis. Catalyzes the cyclization of GTP to (8S)-3',8-cyclo-7,8-dihydroguanosine 5'-triphosphate. The chain is Probable GTP 3',8-cyclase from Thermococcus kodakarensis (strain ATCC BAA-918 / JCM 12380 / KOD1) (Pyrococcus kodakaraensis (strain KOD1)).